Reading from the N-terminus, the 362-residue chain is MDTNRKFTLVKSLSIGLGTFLVGSVFLTVNDEASASTKVDAPKVEQEAPAKADAPKVEQEAPAKADAPKVEQEAPAKVDAPKVEQEAPAKVDAPKVEQEAPAKADAPKVEQKRTFVREAAQSNHSASWLNNYKKGYGYGPYPLGINGGNHYGVDFFMNVGTPVRAISDGKIVEAGWTNYGGGNEIGLVENDGVHRQWYMHLSKFNVKVGDRVKAGQIIGWSGSTGYSTAPHLHFQRMTNSFSNNTAQDPMPFLKSAGYGSNSTSSSNNNGYKTNKYGTLYKSESASFTANTDIITRLTGPFRSMPQSGVLRKGLTIKYDEVMKQDGHVWVGYNTNSGKRVYLPVRTWNESTGELGPLWGTIK.

The N-terminal stretch at Met-1–Ala-35 is a signal peptide. The disordered stretch occupies residues Ala-35–Glu-110. Over residues Asp-40 to Glu-110 the composition is skewed to basic and acidic residues. Zn(2+) contacts are provided by His-150 and Asp-154. The active site involves His-231. Residue His-233 coordinates Zn(2+). An SH3b domain is found at Ser-282–Ser-350.

It belongs to the peptidase M23B family. Requires Zn(2+) as cofactor.

It localises to the secreted. It carries out the reaction Hydrolysis of the -Gly-|-Gly- bond in the pentaglycine inter-peptide link joining staphylococcal cell wall peptidoglycans.. Lyses staphylococcal cells by hydrolyzing the polyglycine interpeptide bridges of the peptidoglycan. This is Glycyl-glycine endopeptidase ALE-1 from Staphylococcus capitis.